Here is a 582-residue protein sequence, read N- to C-terminus: Formate--tetrahydrofolate ligase (582 aa).

65 to 72 (TPLGEGKT) lines the ATP pocket.

The protein belongs to the formate--tetrahydrofolate ligase family.

It carries out the reaction (6S)-5,6,7,8-tetrahydrofolate + formate + ATP = (6R)-10-formyltetrahydrofolate + ADP + phosphate. Its pathway is one-carbon metabolism; tetrahydrofolate interconversion. This chain is Formate--tetrahydrofolate ligase, found in Aliivibrio fischeri (strain ATCC 700601 / ES114) (Vibrio fischeri).